A 576-amino-acid chain; its full sequence is 9-cis-epoxycarotenoid dioxygenase NCED2, chloroplastic (576 aa).

The N-terminal 34 residues, 1-34 (MEVPIAAMTFAHPANVMTLASRQPKSKRSHISPA), are a transit peptide targeting the chloroplast. Residues His270, His319, His385, and His563 each coordinate Fe cation.

Belongs to the carotenoid oxygenase family. The cofactor is Fe(2+).

The protein resides in the plastid. It is found in the chloroplast. It catalyses the reaction a 9-cis-epoxycarotenoid + O2 = a 12'-apo-carotenal + 2-cis,4-trans-xanthoxin. The catalysed reaction is 9-cis-violaxanthin + O2 = (3S,5R,6S)-5,6-epoxy-3-hydroxy-5,6-dihydro-12'-apo-beta-caroten-12'-al + 2-cis,4-trans-xanthoxin. The enzyme catalyses 9'-cis-neoxanthin + O2 = (3S,5R,6R)-3,5-dihydroxy-6,7-didehydro-5,6-dihydro-12'-apo-beta-caroten-12'-al + 2-cis,4-trans-xanthoxin. Its function is as follows. Has a 11,12(11',12') 9-cis epoxycarotenoid cleavage activity. Catalyzes the first step of abscisic-acid biosynthesis from carotenoids. In Oryza sativa subsp. japonica (Rice), this protein is 9-cis-epoxycarotenoid dioxygenase NCED2, chloroplastic.